A 514-amino-acid chain; its full sequence is Peptide chain release factor 3 (514 aa).

The region spanning K8–H268 is the tr-type G domain. Residues S17–T24, D85–H89, and N139–D142 contribute to the GTP site.

This sequence belongs to the TRAFAC class translation factor GTPase superfamily. Classic translation factor GTPase family. PrfC subfamily.

It localises to the cytoplasm. Its function is as follows. Increases the formation of ribosomal termination complexes and stimulates activities of RF-1 and RF-2. It binds guanine nucleotides and has strong preference for UGA stop codons. It may interact directly with the ribosome. The stimulation of RF-1 and RF-2 is significantly reduced by GTP and GDP, but not by GMP. In Streptococcus mutans serotype c (strain ATCC 700610 / UA159), this protein is Peptide chain release factor 3.